The primary structure comprises 164 residues: MTIALFPGSFDPITNGHIETAKKAAEIFEKVYLVAMTNTSKHYLFSPGERADFARDALKDVANIEVLEKPDEITVDLAHELNAKAIVRGVRNSADFRYEQEIAGINKRLAPDINTILLFSSPENSFVASSMIKELAKFDKDVSQFLPEKAAKALRRKLGNEYAE.

S9 lines the substrate pocket. Residues 9–10 (SF) and H17 each bind ATP. Residues K41, T74, and R88 each coordinate substrate. ATP is bound by residues 89–91 (GVR), E99, and 124–130 (NSFVASS).

This sequence belongs to the bacterial CoaD family. As to quaternary structure, homohexamer. Mg(2+) is required as a cofactor.

The protein localises to the cytoplasm. The catalysed reaction is (R)-4'-phosphopantetheine + ATP + H(+) = 3'-dephospho-CoA + diphosphate. Its pathway is cofactor biosynthesis; coenzyme A biosynthesis; CoA from (R)-pantothenate: step 4/5. Its function is as follows. Reversibly transfers an adenylyl group from ATP to 4'-phosphopantetheine, yielding dephospho-CoA (dPCoA) and pyrophosphate. The chain is Phosphopantetheine adenylyltransferase from Lactobacillus helveticus (strain DPC 4571).